A 1197-amino-acid polypeptide reads, in one-letter code: Pleckstrin homology domain-containing family A member 7 (1197 aa).

WW domains lie at 8-41 and 53-86; these read DTLPDNGSYGVCRDGRVFFIDDEARATTWLHPRT and SDLPSGWEEGFTKEGASFFIDHNQRTTTFIHPVT. The tract at residues 98-148 is disordered; sequence LQDQPGGRMLKQPSSTISEASTTVTTSTVDSTSGSKGSRSSGRVHSFGKRD. A compositionally biased stretch (low complexity) spans 111 to 140; sequence SSTISEASTTVTTSTVDSTSGSKGSRSSGR. Positions 158–257 constitute a PH domain; the sequence is PVVVRGWLYK…WVRAMNQAAL (100 aa). 3 disordered regions span residues 348 to 384, 423 to 467, and 508 to 577; these read PGSTPPSRVASRAPSRAVSTPPVVQRNGTPIEQNGMP, LVST…QLPS, and FRHG…TVRP. The span at 528–546 shows a compositional bias: low complexity; it reads VSSTRNNSDVSRSVSVPPT. The span at 568–577 shows a compositional bias: basic and acidic residues; sequence TPAERVTVRP. Positions 678–799 form a coiled coil; that stretch reads DKILQELEFR…RIEDVMTGLS (122 aa). Disordered stretches follow at residues 830–928 and 1032–1064; these read SRCM…SYSN and HQRALVRERKRNLSQGERHHSRASTRPVNSDPG. Basic and acidic residues predominate over residues 913-924; that stretch reads RQSDERKRDRES. Residues 1016 to 1044 adopt a coiled-coil conformation; sequence QRVRMSVEEQLERMKRHQRALVRERKRNL. Over residues 1032 to 1043 the composition is skewed to basic residues; the sequence is HQRALVRERKRN.

It is found in the cell junction. The protein localises to the adherens junction. Its subcellular location is the cytoplasm. It localises to the cytoskeleton. The protein resides in the microtubule organizing center. It is found in the centrosome. In terms of biological role, required for zonula adherens biogenesis and maintenance. The polypeptide is Pleckstrin homology domain-containing family A member 7 (plekha7) (Danio rerio (Zebrafish)).